We begin with the raw amino-acid sequence, 649 residues long: Echinoderm microtubule-associated protein-like 2 (649 aa).

Residues 10–649 (KEVIFSVEDG…DTSVLQWRVV (640 aa)) are tandem atypical propeller in EMLs. Coiled-coil stretches lie at residues 13–58 (IFSV…LKLE) and 73–114 (YLLP…LAIH). WD repeat units lie at residues 56–93 (KLEW…LYSV), 97–144 (RQRH…IWDS), 151–192 (HVLG…VWDW), 195–234 (ETKV…FWTL), 241–280 (KRQG…VWGK), 285–323 (ITQA…LWGS), 369–406 (FSLL…LWSS), 410–447 (QPLW…LLDT), 452–489 (LVAI…VYTV), 495–535 (KVSR…YWDP), 564–602 (FGIW…LFSY), and 609–648 (ALSH…QWRV).

The protein belongs to the WD repeat EMAP family. Homotrimer; self-association is mediated by the N-terminal coiled coil. As to quaternary structure, interacts with GRID2 and may also interact with GRID1. Interacts with EML3. Binds unpolymerized tubulins via its WD repeat region. As to expression, ubiquitous.

It is found in the cytoplasm. The protein localises to the cytoskeleton. Its subcellular location is the spindle. Functionally, tubulin binding protein that inhibits microtubule nucleation and growth, resulting in shorter microtubules. The protein is Echinoderm microtubule-associated protein-like 2 (EML2) of Homo sapiens (Human).